The sequence spans 156 residues: Small ribosomal subunit protein uS7 (156 aa).

This sequence belongs to the universal ribosomal protein uS7 family. Part of the 30S ribosomal subunit. Contacts proteins S9 and S11.

In terms of biological role, one of the primary rRNA binding proteins, it binds directly to 16S rRNA where it nucleates assembly of the head domain of the 30S subunit. Is located at the subunit interface close to the decoding center, probably blocks exit of the E-site tRNA. This Idiomarina loihiensis (strain ATCC BAA-735 / DSM 15497 / L2-TR) protein is Small ribosomal subunit protein uS7.